The sequence spans 562 residues: Phosphoglucomutase-1 (562 aa).

Methionine 1 bears the N-acetylmethionine mark. Lysine 16 carries the N6-acetyllysine modification. Residue arginine 23 participates in alpha-D-glucose 1,6-bisphosphate binding. Threonine 115 carries the phosphothreonine modification. Alpha-D-glucose 1,6-bisphosphate is bound at residue serine 117. The Phosphoserine intermediate role is filled by serine 117. Serine 117 contributes to the Mg(2+) binding site. A phosphoserine mark is found at serine 117 and serine 134. Residue threonine 185 is modified to Phosphothreonine. Serine 201, serine 206, and serine 213 each carry phosphoserine. Residues aspartate 288, aspartate 290, and aspartate 292 each coordinate Mg(2+). Positions 292 and 293 each coordinate alpha-D-glucose 1,6-bisphosphate. Lysine 349 carries the post-translational modification N6-acetyllysine. Tyrosine 353 carries the post-translational modification Phosphotyrosine. Threonine 357 lines the alpha-D-glucose 1,6-bisphosphate pocket. A Phosphoserine modification is found at serine 369. Residues glutamate 376, serine 378, and lysine 389 each contribute to the alpha-D-glucose 1,6-bisphosphate site. Residue serine 378 is modified to Phosphoserine. Lysine 419 carries the post-translational modification N6-succinyllysine. A Phosphothreonine; by PAK1 modification is found at threonine 467. Phosphoserine is present on residues serine 477, serine 485, and serine 505. Phosphothreonine is present on threonine 507. Phosphoserine is present on residues serine 509 and serine 541.

Belongs to the phosphohexose mutase family. Monomer. The cofactor is Mg(2+). Post-translationally, phosphorylation at Thr-467 by PAK1 significantly enhances enzymatic activity.

Its subcellular location is the cytoplasm. The catalysed reaction is alpha-D-glucose 1-phosphate = alpha-D-glucose 6-phosphate. It carries out the reaction O-phospho-L-seryl-[protein] + alpha-D-glucose 1-phosphate = alpha-D-glucose 1,6-bisphosphate + L-seryl-[protein]. It catalyses the reaction alpha-D-glucose 1,6-bisphosphate + L-seryl-[protein] = O-phospho-L-seryl-[protein] + alpha-D-glucose 6-phosphate. With respect to regulation, glucose-1,6-bisphosphate enhances phosphorylation of the active site Ser-117, and thereby increases enzyme activity. Functionally, catalyzes the reversible isomerization of alpha-D-glucose 1-phosphate to alpha-D-glucose 6-phosphate. The mechanism proceeds via the intermediate compound alpha-D-glucose 1,6-bisphosphate. This enzyme participates in both the breakdown and synthesis of glucose. The sequence is that of Phosphoglucomutase-1 (PGM1) from Homo sapiens (Human).